A 402-amino-acid chain; its full sequence is Phosphoglycerate kinase (402 aa).

Residues 24–26 (DFN), Arg-40, 63–66 (HFGR), Arg-122, and Arg-155 each bind substrate. ATP contacts are provided by residues Lys-206, Gly-297, Glu-328, and 358–361 (GGDS).

This sequence belongs to the phosphoglycerate kinase family. As to quaternary structure, monomer.

The protein localises to the cytoplasm. It catalyses the reaction (2R)-3-phosphoglycerate + ATP = (2R)-3-phospho-glyceroyl phosphate + ADP. Its pathway is carbohydrate degradation; glycolysis; pyruvate from D-glyceraldehyde 3-phosphate: step 2/5. In Prochlorococcus marinus (strain MIT 9301), this protein is Phosphoglycerate kinase.